The chain runs to 969 residues: Defective in germ line development protein 3 (969 aa).

The gld-2-binding stretch occupies residues 34–81; the sequence is MAENAASARKLFVSSALKDIIVNPENFYHDFQQSAQMAEDANQRRQVS. 5 consecutive KH domains span residues 34 to 109, 113 to 187, 189 to 259, 270 to 342, and 344 to 419; these read MAEN…MIEI, RVTL…MRRN, HFTV…NEIL, FTLH…IMDL, and PISM…YQKV. The segment at 57–471 is gls-1-binding; the sequence is PENFYHDFQQ…GSNGRRHRSS (415 aa). 2 disordered regions span residues 459–508 and 602–711; these read LSDG…SFSE and EQHR…GDIH. A compositionally biased stretch (polar residues) spans 487-508; sequence KQFSESSGGPSRSHTRVSSFSE. The span at 631-644 shows a compositional bias: low complexity; the sequence is PSSSTGSYYPSTTP. A compositionally biased stretch (basic and acidic residues) spans 647–659; the sequence is RVYEQVREDDLRS. Residues 664-676 are compositionally biased toward polar residues; sequence RRTSVNGDDQNVE. 2 stretches are compositionally biased toward basic and acidic residues: residues 677-687 and 694-711; these read SMHDQGYERQY and LQKD…GDIH. The gls-1-binding stretch occupies residues 769 to 969; the sequence is LYMHESPHND…DLSLDETSTY (201 aa). The fbf-1-binding stretch occupies residues 860–949; sequence NGVTKTILEP…VLNEKEKEIA (90 aa). The disordered stretch occupies residues 950-969; it reads DKSIESTVTQDLSLDETSTY. Polar residues predominate over residues 954-969; that stretch reads ESTVTQDLSLDETSTY.

Interacts (via its KH1 domain) with gld-2. Isoform A but not isoform B interacts specifically with fbf-1 and fbf-2 in an RNA-independent manner. Isoform A interacts with gls-1 isoform C. Expressed in the germline (at protein level). In adult hermaphrodites, first detected in the transition zone (TZ), weakly expressed in the early mitotic region and in pachytene germ cells, and becomes more abundantly expressed as germ cells enter diakinesis (at protein level). Expressed in primary spermatocytes, but not in secondary spermatocytes or adult sperm (at protein level).

It localises to the cytoplasm. The protein localises to the cytoplasmic granule. Its subcellular location is the perinuclear region. Its function is as follows. Required maternally for germline survival and embryogenesis. Forms a complex with gls-1 which promotes the oogenic cell fate by freeing the translational repressor fbf to repress sperm promoting factors. Promotes maturation of primary spermatocytes to mature sperm. Required during hermaphrodite development to promote sperm fate, which is critical for determining the normal number of sperm. Promotion of sperm fate is at the expense of oogenesis, possibly through the negative regulation of fbf. Required during male development for the continued production of sperm and inhibition of oogenesis. Together with gld-2, promotes the transition from mitosis to meiosis. Required for polyadenylation of neg-1 mRNA during embryogenesis. This Caenorhabditis elegans protein is Defective in germ line development protein 3.